The following is a 198-amino-acid chain: Pyridoxal 5'-phosphate synthase subunit PdxT (198 aa).

49-51 provides a ligand contact to L-glutamine; it reads GES. Residue C81 is the Nucleophile of the active site. L-glutamine contacts are provided by residues R113 and 141–142; that span reads IR. Catalysis depends on charge relay system residues H177 and E179.

It belongs to the glutaminase PdxT/SNO family. As to quaternary structure, in the presence of PdxS, forms a dodecamer of heterodimers. Only shows activity in the heterodimer.

The enzyme catalyses aldehydo-D-ribose 5-phosphate + D-glyceraldehyde 3-phosphate + L-glutamine = pyridoxal 5'-phosphate + L-glutamate + phosphate + 3 H2O + H(+). It carries out the reaction L-glutamine + H2O = L-glutamate + NH4(+). Its pathway is cofactor biosynthesis; pyridoxal 5'-phosphate biosynthesis. Its function is as follows. Catalyzes the hydrolysis of glutamine to glutamate and ammonia as part of the biosynthesis of pyridoxal 5'-phosphate. The resulting ammonia molecule is channeled to the active site of PdxS. This Mycobacterium leprae (strain TN) protein is Pyridoxal 5'-phosphate synthase subunit PdxT.